The sequence spans 152 residues: MTDLTLIFISLSGNTLSFVRRLSQYLAEKHHIQTKTINIKELHHETFPVMESFVAILPTYLEGGNGIDSGKVEILTNPLGDFIAAHDNVKHCLGIIGSGNKNFNHQYCLTAKQYAKRFGFPMLGDFELRGTNADIERLAQVIVARLTADQQS.

The protein belongs to the NrdI family.

This Streptococcus pyogenes serotype M18 (strain MGAS8232) protein is Putative NrdI-like protein.